A 157-amino-acid chain; its full sequence is Arginine repressor (157 aa).

Belongs to the ArgR family.

It localises to the cytoplasm. It participates in amino-acid biosynthesis; L-arginine biosynthesis [regulation]. In terms of biological role, regulates arginine biosynthesis genes. The polypeptide is Arginine repressor (Bacteroides fragilis (strain YCH46)).